The following is a 443-amino-acid chain: D-aminoacyl-tRNA deacylase (443 aa).

Belongs to the DtdA deacylase family. In terms of assembly, monomer. Requires Zn(2+) as cofactor.

It catalyses the reaction a D-aminoacyl-tRNA + H2O = a tRNA + a D-alpha-amino acid + H(+). It carries out the reaction glycyl-tRNA(Ala) + H2O = tRNA(Ala) + glycine + H(+). In terms of biological role, D-aminoacyl-tRNA deacylase with broad substrate specificity. By recycling D-aminoacyl-tRNA to D-amino acids and free tRNA molecules, this enzyme counteracts the toxicity associated with the formation of D-aminoacyl-tRNA entities in vivo. This chain is D-aminoacyl-tRNA deacylase, found in Methanocorpusculum labreanum (strain ATCC 43576 / DSM 4855 / Z).